Reading from the N-terminus, the 464-residue chain is Putative dipeptidase CPC735_014430 (464 aa).

A disordered region spans residues 1 to 34 (MSTMSARDNEKGSARSQPSHAAASEIENVPRPSR). Residues 40–56 (GTMIKVFIICACAGIVS) form a helical membrane-spanning segment. Zn(2+) contacts are provided by His-93, Asp-95, and Glu-206. Residues Cys-145 and Cys-235 are joined by a disulfide bond. His-233 lines the substrate pocket. Residues His-277 and His-298 each coordinate Zn(2+). 2 residues coordinate substrate: Arg-309 and Asp-369. N-linked (GlcNAc...) asparagine glycosylation occurs at Asn-382.

It belongs to the metallo-dependent hydrolases superfamily. Peptidase M19 family. It depends on Zn(2+) as a cofactor.

It localises to the membrane. It catalyses the reaction an L-aminoacyl-L-amino acid + H2O = 2 an L-alpha-amino acid. Its function is as follows. Hydrolyzes a wide range of dipeptides. This is Putative dipeptidase CPC735_014430 from Coccidioides posadasii (strain C735) (Valley fever fungus).